A 178-amino-acid polypeptide reads, in one-letter code: MASKGVNKVILVGNLGQDPEVRYMPNGGAVVNLSLATSDTWTDKQTGDKKERTEWHRVVLYGKLAEIASEYLRKGSQVYIEGALRTRKWTDQSGVEKYTTEVVVSQSGTMQMLGGRNSAGSGQQQGGWGQPQQPAAPSHSGMPPQQHPANEPPMDFDDDIPFAPFGHSVARHALYVLS.

The region spanning 6–111 (VNKVILVGNL…VVVSQSGTMQ (106 aa)) is the SSB domain. Residues 55 to 61 (WHRVVLY) mediate DNA binding. Residues 111-161 (QMLGGRNSAGSGQQQGGWGQPQQPAAPSHSGMPPQQHPANEPPMDFDDDIP) are disordered.

In terms of assembly, homotetramer.

The sequence is that of Single-stranded DNA-binding protein 2 (ssb2) from Salmonella typhi.